Consider the following 155-residue polypeptide: Antitoxin HicB 1 (155 aa).

Residues 99 to 153 (MLNAFLDSKLTQIELANRMGVKKQEVTRIFDLRHSTKIDTVGKVASAIGHQLTLS) enclose the HTH cro/C1-type domain. Positions 110–129 (QIELANRMGVKKQEVTRIFD) form a DNA-binding region, H-T-H motif.

Belongs to the HicB antitoxin family. As to quaternary structure, probably forms a complex with the probable mRNA interferase HicA1 (its cognate toxin); when complexed with HicA 1 inhibits the toxin activity.

Functionally, antitoxin component of a type II toxin-antitoxin (TA) system. Functions as an mRNA interferase antitoxin preventing effects of the HicA 1 toxin. The polypeptide is Antitoxin HicB 1 (hicB1) (Photorhabdus laumondii subsp. laumondii (strain DSM 15139 / CIP 105565 / TT01) (Photorhabdus luminescens subsp. laumondii)).